Consider the following 800-residue polypeptide: Phenylalanine--tRNA ligase beta subunit (800 aa).

Residues 39 to 152 (AAGLSKIVVG…EDAVPGEEVF (114 aa)) form the tRNA-binding domain. One can recognise a B5 domain in the interval 405-480 (TSDVEVSSTL…RIYGYDRLPT (76 aa)). Positions 458, 464, 467, and 468 each coordinate Mg(2+). The FDX-ACB domain occupies 707–800 (TKFPAVSRDV…LEEKVNAEVR (94 aa)).

It belongs to the phenylalanyl-tRNA synthetase beta subunit family. Type 1 subfamily. In terms of assembly, tetramer of two alpha and two beta subunits. Requires Mg(2+) as cofactor.

It is found in the cytoplasm. The enzyme catalyses tRNA(Phe) + L-phenylalanine + ATP = L-phenylalanyl-tRNA(Phe) + AMP + diphosphate + H(+). The protein is Phenylalanine--tRNA ligase beta subunit of Streptococcus pneumoniae (strain ATCC BAA-255 / R6).